Consider the following 132-residue polypeptide: Small ribosomal subunit protein uS8 (132 aa).

This sequence belongs to the universal ribosomal protein uS8 family. Part of the 30S ribosomal subunit. Contacts proteins S5 and S12.

Its function is as follows. One of the primary rRNA binding proteins, it binds directly to 16S rRNA central domain where it helps coordinate assembly of the platform of the 30S subunit. The polypeptide is Small ribosomal subunit protein uS8 (Maricaulis maris (strain MCS10) (Caulobacter maris)).